Here is a 562-residue protein sequence, read N- to C-terminus: O-fucosyltransferase 4 (562 aa).

Residues 10 to 46 (SIQNRLPGSDHTTPSPPTSPHLCRSRSKSSSVSGQQQ) form a disordered region. Positions 37-46 (KSSSVSGQQQ) are enriched in low complexity. A helical; Signal-anchor for type II membrane protein membrane pass occupies residues 67-87 (GILLFAPIIYISCMLFHLHAA). N-linked (GlcNAc...) asparagine glycans are attached at residues asparagine 122, asparagine 146, asparagine 185, and asparagine 239. 332–334 (HLR) contributes to the substrate binding site. 4 N-linked (GlcNAc...) asparagine glycosylation sites follow: asparagine 404, asparagine 420, asparagine 450, and asparagine 555.

Belongs to the glycosyltransferase GT106 family.

The protein resides in the membrane. The protein operates within glycan metabolism. This is O-fucosyltransferase 4 from Arabidopsis thaliana (Mouse-ear cress).